Here is an 84-residue protein sequence, read N- to C-terminus: Large ribosomal subunit protein bL27 (84 aa).

The interval 1-25 (MSHKKAGGSTRNGRDSNAQRRGVKK) is disordered.

Belongs to the bacterial ribosomal protein bL27 family.

The sequence is that of Large ribosomal subunit protein bL27 from Desulforapulum autotrophicum (strain ATCC 43914 / DSM 3382 / VKM B-1955 / HRM2) (Desulfobacterium autotrophicum).